We begin with the raw amino-acid sequence, 415 residues long: Gamma-glutamyl phosphate reductase (415 aa).

The protein belongs to the gamma-glutamyl phosphate reductase family.

Its subcellular location is the cytoplasm. The enzyme catalyses L-glutamate 5-semialdehyde + phosphate + NADP(+) = L-glutamyl 5-phosphate + NADPH + H(+). The protein operates within amino-acid biosynthesis; L-proline biosynthesis; L-glutamate 5-semialdehyde from L-glutamate: step 2/2. Catalyzes the NADPH-dependent reduction of L-glutamate 5-phosphate into L-glutamate 5-semialdehyde and phosphate. The product spontaneously undergoes cyclization to form 1-pyrroline-5-carboxylate. This Bacillus velezensis (strain DSM 23117 / BGSC 10A6 / LMG 26770 / FZB42) (Bacillus amyloliquefaciens subsp. plantarum) protein is Gamma-glutamyl phosphate reductase.